The primary structure comprises 501 residues: Putative antiporter subunit mnhD2 (501 aa).

The next 14 helical transmembrane spans lie at 4–24 (SNLL…LVFI), 33–53 (IFSI…LIYV), 79–99 (LSLL…AYGF), 109–129 (YYLP…FLTA), 131–151 (LFNI…LITL), 162–182 (IIYV…VGLL), 207–227 (IVIV…LVLF), 245–265 (FAAL…TLIF), 274–294 (PLLV…VLAY), 309–329 (IGFI…GAIF), 334–354 (DIVV…ITGL), 369–389 (FFGV…PFSG), 409–429 (LALM…IFFV), and 452–472 (NLIG…PLLF).

Belongs to the CPA3 antiporters (TC 2.A.63) subunit D family. As to quaternary structure, may form a heterooligomeric complex that consists of seven subunits: mnhA2, mnhB2, mnhC2, mnhD2, mnhE2, mnhF2 and mnhG2.

It localises to the cell membrane. The chain is Putative antiporter subunit mnhD2 (mnhD2) from Staphylococcus saprophyticus subsp. saprophyticus (strain ATCC 15305 / DSM 20229 / NCIMB 8711 / NCTC 7292 / S-41).